We begin with the raw amino-acid sequence, 136 residues long: Protein LpdD (136 aa).

Belongs to the CinA family.

Functionally, probably involved in tannin degradation, however the precise biochemical function in metabolism of gallate is unknown. This Lactiplantibacillus plantarum (strain ATCC BAA-793 / NCIMB 8826 / WCFS1) (Lactobacillus plantarum) protein is Protein LpdD.